The following is a 427-amino-acid chain: 3-phosphoshikimate 1-carboxyvinyltransferase (427 aa).

Residues Lys23, Ser24, and Arg28 each coordinate 3-phosphoshikimate. Phosphoenolpyruvate is bound at residue Lys23. Phosphoenolpyruvate contacts are provided by Gly97 and Arg125. Residues Ser170, Ser171, Gln172, Ser198, Asp314, Asn337, and Lys341 each contribute to the 3-phosphoshikimate site. Gln172 contacts phosphoenolpyruvate. Asp314 acts as the Proton acceptor in catalysis. Phosphoenolpyruvate-binding residues include Arg345, Arg387, and Lys412.

The protein belongs to the EPSP synthase family. In terms of assembly, monomer.

It is found in the cytoplasm. The enzyme catalyses 3-phosphoshikimate + phosphoenolpyruvate = 5-O-(1-carboxyvinyl)-3-phosphoshikimate + phosphate. The protein operates within metabolic intermediate biosynthesis; chorismate biosynthesis; chorismate from D-erythrose 4-phosphate and phosphoenolpyruvate: step 6/7. In terms of biological role, catalyzes the transfer of the enolpyruvyl moiety of phosphoenolpyruvate (PEP) to the 5-hydroxyl of shikimate-3-phosphate (S3P) to produce enolpyruvyl shikimate-3-phosphate and inorganic phosphate. This Buchnera aphidicola subsp. Acyrthosiphon pisum (strain Tuc7) protein is 3-phosphoshikimate 1-carboxyvinyltransferase.